Reading from the N-terminus, the 406-residue chain is F-box/WD repeat-containing protein mec-15 (406 aa).

The F-box domain occupies 6–53 (PTELISLPSELLCHLFTYLPQRQLITEIPLVCRRFNTILNDDKFWSRR). WD repeat units follow at residues 101–142 (GHSA…NGED), 156–195 (AHSG…ALQN), 242–279 (LHKR…KPVL), 281–320 (EYSP…VLQT), and 365–406 (SHEL…DQEN).

May interact with the SCF ubiquitin ligase complex component skr-1. In terms of tissue distribution, expressed in several neurons in the head, tail and ventral cord, but absent in touch receptor neurons in adults. Expressed in GABAergic and cholinergic motor neurons.

The protein localises to the perikaryon. Plays a role in mechanosensory transduction (touch sensitivity), touch receptor neuron development and synapse formation. Regulates expression of the protein snb-1 and the distribution of synaptic vesicles at synapses to promote synaptic transmission at the neuromuscular junctions of GABAergic motor neurons. This Caenorhabditis elegans protein is F-box/WD repeat-containing protein mec-15.